The following is a 341-amino-acid chain: Annexin A1 isoform p35 (341 aa).

Annexin repeat units lie at residues 37–108, 109–180, 192–263, and 267–338; these read FDPS…ALLK, TPAQ…SLAK, ELAE…ALVK, and SKPA…ALCG.

It belongs to the annexin family. In terms of processing, in contrast to mammalian homologs, does not contain a tyrosine phosphorylation site in the N-terminal part.

The protein localises to the nucleus. It is found in the cytoplasm. It localises to the cell projection. The protein resides in the cilium. Its subcellular location is the basolateral cell membrane. In terms of biological role, calcium/phospholipid-binding protein which promotes membrane fusion and is involved in exocytosis. This protein regulates phospholipase A2 activity. It seems to bind from two to four calcium ions with high affinity. This Columba livia (Rock dove) protein is Annexin A1 isoform p35 (CP35).